The following is a 410-amino-acid chain: Lissencephaly-1 homolog (410 aa).

The region spanning 7-39 is the LisH domain; it reads QRDELNRAIADYLRSNGYEEAYSVFKKEAELDM. A coiled-coil region spans residues 56–82; sequence TSVIRLQKKVMELESKLNEAKEEFTSG. WD repeat units lie at residues 106–147, 148–187, 190–229, 232–271, 274–333, 336–377, and 379–410; these read GHRS…RTLK, GHTD…CIRT, GHDH…CVKT, GHRE…CKAE, EHEH…CLMT, GHDN…KTLN, and HEHF…WECR.

The protein belongs to the WD repeat LIS1/nudF family. As to quaternary structure, can self-associate. Component of the cytosolic PAF-AH (I) heterotetrameric enzyme, which is composed of PAFAH1B1 (beta), PAFAH1B2 (alpha2) and PAFAH1B3 (alpha1) subunits. The catalytic activity of the enzyme resides in the alpha1 (PAFAH1B3) and alpha2 (PAFAH1B2) subunits, whereas the beta subunit (PAFAH1B1) has regulatory activity. Trimer formation is not essential for the catalytic activity. Interacts with dynein, dynactin, nde1 and ndel1.

It localises to the cytoplasm. It is found in the cytoskeleton. The protein resides in the microtubule organizing center. The protein localises to the centrosome. Functionally, regulatory subunit (beta subunit) of the cytosolic type I platelet-activating factor (PAF) acetylhydrolase (PAF-AH (I)), an enzyme that catalyzes the hydrolyze of the acetyl group at the sn-2 position of PAF and its analogs and participates in the PAF inactivation. Positively regulates the activity of the minus-end directed microtubule motor protein dynein. May enhance dynein-mediated microtubule sliding by targeting dynein to the microtubule plus end. Required for several dynein- and microtubule-dependent processes such as the maintenance of Golgi integrity, the peripheral transport of microtubule fragments and the coupling of the nucleus and centrosome. May be required for proliferation of neuronal precursors and neuronal migration. This Xenopus tropicalis (Western clawed frog) protein is Lissencephaly-1 homolog (pafah1b1).